A 157-amino-acid chain; its full sequence is Transmembrane protein 50A (157 aa).

Ser-2 carries the post-translational modification N-acetylserine. Position 2 is a phosphoserine (Ser-2). 4 helical membrane-spanning segments follow: residues 26–46, 58–78, 95–115, and 126–146; these read IAAG…AVIY, ACGV…NGQV, IWLF…MWIL, and IVYP…GGLV.

It belongs to the UPF0220 family.

Its subcellular location is the membrane. The protein is Transmembrane protein 50A (TMEM50A) of Homo sapiens (Human).